The chain runs to 507 residues: Cytochrome P450 monooxygenase tpeC (507 aa).

Residues Thr24–Phe44 form a helical membrane-spanning segment. Cys449 provides a ligand contact to heme.

The protein belongs to the cytochrome P450 family. It depends on heme as a cofactor.

The protein resides in the membrane. The protein operates within secondary metabolite biosynthesis. Functionally, cytochrome P450 monooxygenase; part of the gene cluster that mediates the biosynthesis of polyesters containing 2,4-dihydroxy-6-(2-hydroxypropyl)benzoate and 3-hydroxybutyrate moieties, such as talapolyester G, 15G256beta and 15G256beta-2; as well as to oxidized derivatives such as 15G256alpha. The biosynthesis of the polyesters probably starts with the formation of the diketide 3-hydroxybutyryl-S-ACP catalyzed by the partially reducing polyketide synthase tpeA. The acceptance of 3-hydroxybutyryl by the non-reducing polyketide synthase tpeB would initiate further elongation and cyclization, catalyzed by KS and PT, respectively, to form 2,4-dihydroxy-6-(2-hydroxyn-propyl)benzoyl-S-ACP intermediate. The TE domain could catalyze lactonization at this step to yield 6-hydroxymellein as a derailment product. The polyesterification process maybe occurs when additional molecules of 3-hydroxybutyryl are transferred to tpeB. Following the first esterification step, an intramolecular cyclization catalyzed by the TE domain of tpeB would give talarodioxadione 1, whereas the ethyl esterification of talapolyester G perhaps happens spontaneously. Further oxidation by the cytochrome P450 monooxygenase tpeC then leads to the formation of oxidized derivatives. This Talaromyces stipitatus (strain ATCC 10500 / CBS 375.48 / QM 6759 / NRRL 1006) (Penicillium stipitatum) protein is Cytochrome P450 monooxygenase tpeC.